A 989-amino-acid polypeptide reads, in one-letter code: DEAD-box ATP-dependent RNA helicase 45 (989 aa).

Basic and acidic residues-rich tracts occupy residues 1 to 39 (MLEK…KRCD) and 64 to 101 (RDSK…EKEK). Disordered stretches follow at residues 1-248 (MLEK…AADE) and 305-330 (QGED…DDEE). The stretch at 88–182 (LKRDRERRER…ELKRQNEEAQ (95 aa)) forms a coiled coil. S119 carries the phosphoserine modification. The span at 134-179 (SRHGDDDVEKKTRDEQVEDEQKQLAEEVEKRRRRVQEWQELKRQNE) shows a compositional bias: basic and acidic residues. S200 carries the phosphoserine modification. Positions 203-222 (EVKSDSEMDVDRDTKLENGG) are enriched in basic and acidic residues. A compositionally biased stretch (polar residues) spans 230-239 (ENETAVTVSE). A compositionally biased stretch (acidic residues) spans 321 to 330 (DPSLDEDDEE). The short motif at 396-424 (QFWHQTGLTSKILDTLKKLNYEKPMPIQA) is the Q motif element. One can recognise a Helicase ATP-binding domain in the interval 427-605 (LPIIMSGRDC…RKVLNKPVEI (179 aa)). ATP is bound at residue 440–447 (AKTGSGKT). The DEAD box motif lies at 553-556 (DEAD). The 159-residue stretch at 590–748 (QVETLARKVL…PVPDDVKAVA (159 aa)) folds into the Helicase C-terminal domain.

Belongs to the DEAD box helicase family. DDX46/PRP5 subfamily.

The enzyme catalyses ATP + H2O = ADP + phosphate + H(+). This is DEAD-box ATP-dependent RNA helicase 45 (RH45) from Arabidopsis thaliana (Mouse-ear cress).